The chain runs to 379 residues: EP300-interacting inhibitor of differentiation 3 (379 aa).

Residues 32–58 (LKQVEEEEEVEALKVEVAAASDTESDT) adopt a coiled-coil conformation.

It belongs to the NSE4 family. As to quaternary structure, component of the SMC5-SMC6 complex which consists at least of SMC5, SMC6, NSMCE2, NSMCE1, NSMCE4A or EID3 and NSMCE3. NSMCE1, NSMCE4A or EID3 and NSMCE3 probably form a subcomplex that bridges the head domains of the SMC5:SMC6 heterodimer. Homodimer, and heterodimer with EID2. Interacts with the C-terminal region of CREBBP.

The protein localises to the nucleus. The protein resides in the cytoplasm. It is found in the chromosome. It localises to the telomere. Tissue-specific component of the SMC5-SMC6 complex, a complex involved in repair of DNA double-strand breaks by homologous recombination. The complex may promote sister chromatid homologous recombination by recruiting the SMC1-SMC3 cohesin complex to double-strand breaks. The complex is required for telomere maintenance via recombination and mediates sumoylation of shelterin complex (telosome) components. In terms of biological role, acts as a repressor of nuclear receptor-dependent transcription possibly by interfering with CREBBP-dependent coactivation. May function as a coinhibitor of other CREBBP/EP300-dependent transcription factors. In Bos taurus (Bovine), this protein is EP300-interacting inhibitor of differentiation 3.